Consider the following 783-residue polypeptide: Spindle pole body protein ppc89 (783 aa).

Phosphoserine is present on Ser157. 4 disordered regions span residues 180 to 216 (FDSP…ETPS), 434 to 458 (KESN…MNEA), 471 to 504 (ENKS…PTSG), and 528 to 610 (LSQS…MKGN). Composition is skewed to polar residues over residues 201 to 216 (RSKT…ETPS), 437 to 453 (NVTS…SKPL), and 474 to 504 (SGAN…PTSG). Over residues 536-551 (PVKHRKRRPKSKRRIT) the composition is skewed to basic residues. Acidic residues predominate over residues 566–590 (ESDEGSEEISLDSEYSDILSDDGDF).

It is found in the cytoplasm. The protein localises to the cytoskeleton. The protein resides in the microtubule organizing center. It localises to the spindle pole body. Functionally, has a role in meiosis. This Schizosaccharomyces pombe (strain 972 / ATCC 24843) (Fission yeast) protein is Spindle pole body protein ppc89 (ppc89).